Here is a 134-residue protein sequence, read N- to C-terminus: D-xylulose reductase (134 aa).

The disordered stretch occupies residues 31–115 (PATTTXYKXQ…XXQXDKIGRY (85 aa)). Residues 50-59 (QTHEGTHQDV) are compositionally biased toward basic and acidic residues.

The protein belongs to the zinc-containing alcohol dehydrogenase family.

The enzyme catalyses xylitol + NAD(+) = D-xylulose + NADH + H(+). Activated by calcium and inhibited by zinc. The protein is D-xylulose reductase of Sus scrofa (Pig).